Here is a 284-residue protein sequence, read N- to C-terminus: Tryptophan 2,3-dioxygenase (284 aa).

Residues 53–57 (FIVQH), Tyr115, and Arg119 contribute to the substrate site. His242 is a heme binding site. Thr256 serves as a coordination point for substrate.

The protein belongs to the tryptophan 2,3-dioxygenase family. Homotetramer. Heme is required as a cofactor.

The enzyme catalyses L-tryptophan + O2 = N-formyl-L-kynurenine. The protein operates within amino-acid degradation; L-tryptophan degradation via kynurenine pathway; L-kynurenine from L-tryptophan: step 1/2. Heme-dependent dioxygenase that catalyzes the oxidative cleavage of the L-tryptophan (L-Trp) pyrrole ring and converts L-tryptophan to N-formyl-L-kynurenine. Catalyzes the oxidative cleavage of the indole moiety. In Bordetella pertussis (strain Tohama I / ATCC BAA-589 / NCTC 13251), this protein is Tryptophan 2,3-dioxygenase.